The sequence spans 265 residues: Auxin-responsive protein IAA22 (265 aa).

Disordered regions lie at residues Leu54 to Pro88 and Asp172 to Met199. Positions Leu65 to Pro88 are enriched in basic and acidic residues. Residues Thr91 to Asp194 enclose the PB1 domain.

Belongs to the Aux/IAA family. In terms of assembly, homodimers and heterodimers. Highly expressed in flowers. Expressed in roots and seedlings.

The protein resides in the nucleus. In terms of biological role, aux/IAA proteins are short-lived transcriptional factors that function as repressors of early auxin response genes at low auxin concentrations. This is Auxin-responsive protein IAA22 (IAA22) from Oryza sativa subsp. japonica (Rice).